Reading from the N-terminus, the 249-residue chain is Large ribosomal subunit protein uL10m (249 aa).

Residues 1 to 31 constitute a mitochondrion transit peptide; that stretch reads MLQLRFMPGWVPRNGFFGLKETIGTVHKRFY. The segment at 226 to 249 is disordered; sequence SHNDNQKPKEDVESTTDAESKGSK.

This sequence belongs to the universal ribosomal protein uL10 family. As to quaternary structure, component of the mitochondrial large ribosomal subunit (mt-LSU). Mature yeast 74S mitochondrial ribosomes consist of a small (37S) and a large (54S) subunit. The 37S small subunit contains a 15S ribosomal RNA (15S mt-rRNA) and 34 different proteins. The 54S large subunit contains a 21S rRNA (21S mt-rRNA) and 46 different proteins.

Its subcellular location is the mitochondrion. Component of the mitochondrial ribosome (mitoribosome), a dedicated translation machinery responsible for the synthesis of mitochondrial genome-encoded proteins, including at least some of the essential transmembrane subunits of the mitochondrial respiratory chain. The mitoribosomes are attached to the mitochondrial inner membrane and translation products are cotranslationally integrated into the membrane. The polypeptide is Large ribosomal subunit protein uL10m (MRPL11) (Saccharomyces cerevisiae (strain ATCC 204508 / S288c) (Baker's yeast)).